The chain runs to 155 residues: SsrA-binding protein (155 aa).

Residues T135–K147 are compositionally biased toward basic and acidic residues. Residues T135 to R155 are disordered.

Belongs to the SmpB family.

The protein localises to the cytoplasm. Required for rescue of stalled ribosomes mediated by trans-translation. Binds to transfer-messenger RNA (tmRNA), required for stable association of tmRNA with ribosomes. tmRNA and SmpB together mimic tRNA shape, replacing the anticodon stem-loop with SmpB. tmRNA is encoded by the ssrA gene; the 2 termini fold to resemble tRNA(Ala) and it encodes a 'tag peptide', a short internal open reading frame. During trans-translation Ala-aminoacylated tmRNA acts like a tRNA, entering the A-site of stalled ribosomes, displacing the stalled mRNA. The ribosome then switches to translate the ORF on the tmRNA; the nascent peptide is terminated with the 'tag peptide' encoded by the tmRNA and targeted for degradation. The ribosome is freed to recommence translation, which seems to be the essential function of trans-translation. This Streptococcus pyogenes serotype M6 (strain ATCC BAA-946 / MGAS10394) protein is SsrA-binding protein.